Here is a 262-residue protein sequence, read N- to C-terminus: Acyl-[acyl-carrier-protein]--UDP-N-acetylglucosamine O-acyltransferase (262 aa).

It belongs to the transferase hexapeptide repeat family. LpxA subfamily. As to quaternary structure, homotrimer.

Its subcellular location is the cytoplasm. It catalyses the reaction a (3R)-hydroxyacyl-[ACP] + UDP-N-acetyl-alpha-D-glucosamine = a UDP-3-O-[(3R)-3-hydroxyacyl]-N-acetyl-alpha-D-glucosamine + holo-[ACP]. It functions in the pathway glycolipid biosynthesis; lipid IV(A) biosynthesis; lipid IV(A) from (3R)-3-hydroxytetradecanoyl-[acyl-carrier-protein] and UDP-N-acetyl-alpha-D-glucosamine: step 1/6. Involved in the biosynthesis of lipid A, a phosphorylated glycolipid that anchors the lipopolysaccharide to the outer membrane of the cell. The chain is Acyl-[acyl-carrier-protein]--UDP-N-acetylglucosamine O-acyltransferase from Burkholderia lata (strain ATCC 17760 / DSM 23089 / LMG 22485 / NCIMB 9086 / R18194 / 383).